A 98-amino-acid polypeptide reads, in one-letter code: Large ribosomal subunit protein uL23 (98 aa).

It belongs to the universal ribosomal protein uL23 family. In terms of assembly, part of the 50S ribosomal subunit. Contacts protein L29, and trigger factor when it is bound to the ribosome.

One of the early assembly proteins it binds 23S rRNA. One of the proteins that surrounds the polypeptide exit tunnel on the outside of the ribosome. Forms the main docking site for trigger factor binding to the ribosome. This Jannaschia sp. (strain CCS1) protein is Large ribosomal subunit protein uL23.